The following is a 435-amino-acid chain: 3-ketoacyl-CoA thiolase (435 aa).

Cys-98 functions as the Acyl-thioester intermediate in the catalytic mechanism. Catalysis depends on proton acceptor residues His-391 and Cys-421.

The protein belongs to the thiolase-like superfamily. Thiolase family. In terms of assembly, heterotetramer of two alpha chains (FadJ) and two beta chains (FadI).

The protein resides in the cytoplasm. The catalysed reaction is an acyl-CoA + acetyl-CoA = a 3-oxoacyl-CoA + CoA. It participates in lipid metabolism; fatty acid beta-oxidation. Its function is as follows. Catalyzes the final step of fatty acid oxidation in which acetyl-CoA is released and the CoA ester of a fatty acid two carbons shorter is formed. This is 3-ketoacyl-CoA thiolase from Vibrio vulnificus (strain CMCP6).